Here is a 186-residue protein sequence, read N- to C-terminus: 3-hydroxyanthranilate 3,4-dioxygenase (186 aa).

Residue Arg44 participates in O2 binding. His48, Glu54, and His96 together coordinate Fe cation. A substrate-binding site is contributed by Glu54. Substrate-binding residues include Arg100 and Glu110. A divalent metal cation contacts are provided by Cys125, Cys130, Cys164, and Cys167.

The protein belongs to the 3-HAO family. Fe(2+) is required as a cofactor.

The protein resides in the cytoplasm. The catalysed reaction is 3-hydroxyanthranilate + O2 = (2Z,4Z)-2-amino-3-carboxymuconate 6-semialdehyde. Its pathway is cofactor biosynthesis; NAD(+) biosynthesis; quinolinate from L-kynurenine: step 3/3. Its function is as follows. Catalyzes the oxidative ring opening of 3-hydroxyanthranilate to 2-amino-3-carboxymuconate semialdehyde, which spontaneously cyclizes to quinolinate. The sequence is that of 3-hydroxyanthranilate 3,4-dioxygenase from Chaetomium globosum (strain ATCC 6205 / CBS 148.51 / DSM 1962 / NBRC 6347 / NRRL 1970) (Soil fungus).